The primary structure comprises 190 residues: Peptidyl-tRNA hydrolase (190 aa).

Phe14 is a tRNA binding site. The active-site Proton acceptor is His19. TRNA-binding residues include Met64, Asn66, and Asn112.

This sequence belongs to the PTH family. In terms of assembly, monomer.

It localises to the cytoplasm. It catalyses the reaction an N-acyl-L-alpha-aminoacyl-tRNA + H2O = an N-acyl-L-amino acid + a tRNA + H(+). Its function is as follows. Hydrolyzes ribosome-free peptidyl-tRNAs (with 1 or more amino acids incorporated), which drop off the ribosome during protein synthesis, or as a result of ribosome stalling. Functionally, catalyzes the release of premature peptidyl moieties from peptidyl-tRNA molecules trapped in stalled 50S ribosomal subunits, and thus maintains levels of free tRNAs and 50S ribosomes. The protein is Peptidyl-tRNA hydrolase of Staphylococcus aureus (strain Mu3 / ATCC 700698).